The chain runs to 161 residues: Large ribosomal subunit protein uL10 (161 aa).

The protein belongs to the universal ribosomal protein uL10 family. Part of the ribosomal stalk of the 50S ribosomal subunit. The N-terminus interacts with L11 and the large rRNA to form the base of the stalk. The C-terminus forms an elongated spine to which L12 dimers bind in a sequential fashion forming a multimeric L10(L12)X complex.

In terms of biological role, forms part of the ribosomal stalk, playing a central role in the interaction of the ribosome with GTP-bound translation factors. This Wigglesworthia glossinidia brevipalpis protein is Large ribosomal subunit protein uL10 (rplJ).